A 396-amino-acid chain; its full sequence is MAETQVRNFNINFGPQHPAAHGVLRLVLELDGEVVERVDPHIGLLHRGTEKLMEAKTYLQAVPYLDRLDYVAPMNQEHAYALAVERLLDIEVPKRGQLIRVLYSEIGRILNHLLNVTTQAMDVGALTPPLWGFEEREKLMVFYERACGARMHAAYFRPGGVHQDLPDQLIEDIGKWIDPFFTTLKNLDDLITPNRIFKQRNVDIGVVKLEDAWAWGFSGVMVRGSGAAWDLRKSQPYECYSEMEFDIPVGKNGDCYDRYLIRMEEMRQSARIMRQCVDLLLGKERVGPVSNTDHKIVPPKRGEMKRSMEALIHHFKLYTEGYHVPAGEVYAAVEAPKGEFGVYLVSDGSNKPYRFKLRAPGFAHLQAMDFLCRGHMLADVSAILGSLDIVFGEVDR.

This sequence belongs to the complex I 49 kDa subunit family. In terms of assembly, NDH-1 is composed of 14 different subunits. Subunits NuoB, C, D, E, F, and G constitute the peripheral sector of the complex.

It is found in the cell inner membrane. It catalyses the reaction a quinone + NADH + 5 H(+)(in) = a quinol + NAD(+) + 4 H(+)(out). Its function is as follows. NDH-1 shuttles electrons from NADH, via FMN and iron-sulfur (Fe-S) centers, to quinones in the respiratory chain. The immediate electron acceptor for the enzyme in this species is believed to be ubiquinone. Couples the redox reaction to proton translocation (for every two electrons transferred, four hydrogen ions are translocated across the cytoplasmic membrane), and thus conserves the redox energy in a proton gradient. This Brucella abortus (strain S19) protein is NADH-quinone oxidoreductase subunit D.